A 263-amino-acid chain; its full sequence is Methylesterase 3 (263 aa).

Catalysis depends on S85, which acts as the Acyl-ester intermediate. Residues D213 and H241 each act as charge relay system in the active site.

Belongs to the AB hydrolase superfamily. Methylesterase family.

It carries out the reaction methyl (indol-3-yl)acetate + H2O = (indol-3-yl)acetate + methanol + H(+). It catalyses the reaction methyl (-)-jasmonate + H2O = jasmonate + methanol + H(+). The protein operates within plant hormone biosynthesis. It participates in lipid metabolism; oxylipin biosynthesis. Its function is as follows. Methylesterase shown to have carboxylesterase activity, methyl indole-3-acetic acid (MeIAA) esterase activity and methyl jasmonate (MeJA) esterase activity in vitro. This is Methylesterase 3 from Arabidopsis thaliana (Mouse-ear cress).